A 345-amino-acid chain; its full sequence is Olfactory receptor 11G2 (345 aa).

The Extracellular segment spans residues 1–62; the sequence is MHFLSQNDLN…LGFPCPREGQ (62 aa). Asn43 is a glycosylation site (N-linked (GlcNAc...) asparagine). A helical membrane pass occupies residues 63–83; the sequence is ILLFVLFTVVYLLTLMGNGSI. Residues 84–92 lie on the Cytoplasmic side of the membrane; sequence ICAVHWDQR. The helical transmembrane segment at 93–113 threads the bilayer; the sequence is LHAPMYILLANFSFLEICYVT. Residues 114–135 lie on the Extracellular side of the membrane; it reads STVPSMLANFLSDTKIISFSGC. A disulfide bridge links Cys135 with Cys217. The chain crosses the membrane as a helical span at residues 136–156; sequence FLQFYFFFSLGSTECFFLAVM. At 157–181 the chain is on the cytoplasmic side; sequence AFDRYLAICRPLRYPTIMTRRLCTN. The helical transmembrane segment at 182 to 202 threads the bilayer; it reads LVVNCWVLGFIWFLIPIVNIS. The Extracellular portion of the chain corresponds to 203–241; the sequence is QMSFCGSRIIDHFLCDPAPLLTLTCKKGPVIELVFSVLS. The helical transmembrane segment at 242 to 264 threads the bilayer; that stretch reads PLPVFMLFLFIVGSYALVVRAVL. Topologically, residues 265 to 275 are cytoplasmic; sequence RVPSAAGRRKA. Residues 276–296 traverse the membrane as a helical segment; the sequence is FSTCGSHLAVVSLFYGSVLVM. The Extracellular portion of the chain corresponds to 297-309; it reads YGSPPSKNEAGKQ. Residues 310-330 traverse the membrane as a helical segment; the sequence is KTVTLFYSVVTPLLNPVIYSL. The Cytoplasmic segment spans residues 331–345; that stretch reads RNKDMRKALKKFWGT.

This sequence belongs to the G-protein coupled receptor 1 family.

Its subcellular location is the cell membrane. Functionally, odorant receptor. The protein is Olfactory receptor 11G2 (OR11G2) of Homo sapiens (Human).